The chain runs to 180 residues: UPF0340 protein LL0489 (180 aa).

This sequence belongs to the UPF0340 family.

The chain is UPF0340 protein LL0489 (yeiF) from Lactococcus lactis subsp. lactis (strain IL1403) (Streptococcus lactis).